The primary structure comprises 472 residues: Selenium-binding protein 2 (472 aa).

The residue at position 467 (serine 467) is a Phosphoserine.

The protein belongs to the selenium-binding protein family. The N-terminus is blocked. Mainly expressed in liver.

It is found in the nucleus. It localises to the cytoplasm. The protein resides in the cytosol. Its subcellular location is the membrane. Selenium- and acetaminophen-binding protein which may be involved in the sensing of reactive xenobiotics in the cytoplasm. May be involved in intra-Golgi protein transport. This is Selenium-binding protein 2 (Selenbp2) from Mus musculus (Mouse).